We begin with the raw amino-acid sequence, 271 residues long: MLLAIDVRNTHTVLGLVSGTGEHAKVVQHWRIRTEAEITADELALTIDGLIGDDSETLTGVAALSTVPSVLHEMRGMFDQYWSSVPQVLIEPGVRTGLPLLVDNPKEVGADRIVNCLAAHHRFGSACIVVDFGSSICVDVVSAKGEFLGGAIAPGVQVSSDAAAARSAALRRVELTRPRSVVGKNTVECMQSGAVFGFAGLVDGLVERVRRDIDGFGAAGVTVVATGHTAPLILPETHTVDRYEEHLTLDGLRLVYERNRADQRGKARATR.

ATP is bound at residue 6–13 (DVRNTHTV). A substrate-binding site is contributed by 109–112 (GADR). Aspartate 111 functions as the Proton acceptor in the catalytic mechanism. Position 131 (aspartate 131) interacts with K(+). An ATP-binding site is contributed by serine 134. Threonine 186 serves as a coordination point for substrate.

Belongs to the type III pantothenate kinase family. Homodimer. NH4(+) serves as cofactor. It depends on K(+) as a cofactor.

The protein resides in the cytoplasm. It carries out the reaction (R)-pantothenate + ATP = (R)-4'-phosphopantothenate + ADP + H(+). It participates in cofactor biosynthesis; coenzyme A biosynthesis; CoA from (R)-pantothenate: step 1/5. Its function is as follows. Catalyzes the phosphorylation of pantothenate (Pan), the first step in CoA biosynthesis. This is Type III pantothenate kinase from Mycobacteroides abscessus (strain ATCC 19977 / DSM 44196 / CCUG 20993 / CIP 104536 / JCM 13569 / NCTC 13031 / TMC 1543 / L948) (Mycobacterium abscessus).